Consider the following 395-residue polypeptide: Succinate--CoA ligase [ADP-forming] subunit beta (395 aa).

The ATP-grasp domain occupies 9–240 (RDVFEKHGVP…AASADPLEAK (232 aa)). Residues lysine 49, 56 to 58 (GRG), alanine 98, and glutamate 103 each bind ATP. Mg(2+) contacts are provided by asparagine 195 and aspartate 209. Residues asparagine 260 and 322 to 324 (GIT) contribute to the substrate site.

It belongs to the succinate/malate CoA ligase beta subunit family. As to quaternary structure, heterotetramer of two alpha and two beta subunits. Mg(2+) is required as a cofactor.

The enzyme catalyses succinate + ATP + CoA = succinyl-CoA + ADP + phosphate. The catalysed reaction is GTP + succinate + CoA = succinyl-CoA + GDP + phosphate. It functions in the pathway carbohydrate metabolism; tricarboxylic acid cycle; succinate from succinyl-CoA (ligase route): step 1/1. Its function is as follows. Succinyl-CoA synthetase functions in the citric acid cycle (TCA), coupling the hydrolysis of succinyl-CoA to the synthesis of either ATP or GTP and thus represents the only step of substrate-level phosphorylation in the TCA. The beta subunit provides nucleotide specificity of the enzyme and binds the substrate succinate, while the binding sites for coenzyme A and phosphate are found in the alpha subunit. This chain is Succinate--CoA ligase [ADP-forming] subunit beta, found in Beutenbergia cavernae (strain ATCC BAA-8 / DSM 12333 / CCUG 43141 / JCM 11478 / NBRC 16432 / NCIMB 13614 / HKI 0122).